The sequence spans 369 residues: Glutamate 5-kinase (369 aa).

K8 is an ATP binding site. Positions 49, 136, and 148 each coordinate substrate. ATP contacts are provided by residues 168–169 (TD) and 211–217 (TGGMATK). Positions 276–354 (TGKLYLDSGA…DEISQILGYG (79 aa)) constitute a PUA domain.

The protein belongs to the glutamate 5-kinase family.

The protein resides in the cytoplasm. The catalysed reaction is L-glutamate + ATP = L-glutamyl 5-phosphate + ADP. It functions in the pathway amino-acid biosynthesis; L-proline biosynthesis; L-glutamate 5-semialdehyde from L-glutamate: step 1/2. Catalyzes the transfer of a phosphate group to glutamate to form L-glutamate 5-phosphate. The polypeptide is Glutamate 5-kinase (Rippkaea orientalis (strain PCC 8801 / RF-1) (Cyanothece sp. (strain PCC 8801))).